Reading from the N-terminus, the 208-residue chain is Protein-L-isoaspartate O-methyltransferase (208 aa).

Residue Ser59 is part of the active site.

It belongs to the methyltransferase superfamily. L-isoaspartyl/D-aspartyl protein methyltransferase family.

The protein resides in the cytoplasm. It carries out the reaction [protein]-L-isoaspartate + S-adenosyl-L-methionine = [protein]-L-isoaspartate alpha-methyl ester + S-adenosyl-L-homocysteine. Its function is as follows. Catalyzes the methyl esterification of L-isoaspartyl residues in peptides and proteins that result from spontaneous decomposition of normal L-aspartyl and L-asparaginyl residues. It plays a role in the repair and/or degradation of damaged proteins. The polypeptide is Protein-L-isoaspartate O-methyltransferase (Vibrio parahaemolyticus serotype O3:K6 (strain RIMD 2210633)).